We begin with the raw amino-acid sequence, 382 residues long: Farnesyl diphosphate synthase (382 aa).

The isopentenyl diphosphate site is built by Lys81, Arg84, and Gln120. Residues Asp127 and Asp131 each coordinate Mg(2+). Residue Arg136 participates in dimethylallyl diphosphate binding. Residue Arg137 participates in isopentenyl diphosphate binding. Positions 230, 231, 270, 287, and 296 each coordinate dimethylallyl diphosphate.

Belongs to the FPP/GGPP synthase family. Mg(2+) serves as cofactor.

It localises to the cytoplasm. It catalyses the reaction isopentenyl diphosphate + dimethylallyl diphosphate = (2E)-geranyl diphosphate + diphosphate. It carries out the reaction isopentenyl diphosphate + (2E)-geranyl diphosphate = (2E,6E)-farnesyl diphosphate + diphosphate. Its pathway is isoprenoid biosynthesis; farnesyl diphosphate biosynthesis; farnesyl diphosphate from geranyl diphosphate and isopentenyl diphosphate: step 1/1. It participates in isoprenoid biosynthesis; geranyl diphosphate biosynthesis; geranyl diphosphate from dimethylallyl diphosphate and isopentenyl diphosphate: step 1/1. Its activity is regulated as follows. Inhibited by aminobisphosphonate drugs (aBP), such as risedronate and alendronate. In terms of biological role, key enzyme in isoprenoid biosynthesis which catalyzes the formation of farnesyl diphosphate (FPP), a sterol precursor. Involved in the inhibition of cell growth. The chain is Farnesyl diphosphate synthase (fps) from Dictyostelium discoideum (Social amoeba).